A 470-amino-acid chain; its full sequence is Argininosuccinate lyase (470 aa).

The protein belongs to the lyase 1 family. Argininosuccinate lyase subfamily.

It localises to the cytoplasm. It carries out the reaction 2-(N(omega)-L-arginino)succinate = fumarate + L-arginine. The protein operates within amino-acid biosynthesis; L-arginine biosynthesis; L-arginine from L-ornithine and carbamoyl phosphate: step 3/3. The protein is Argininosuccinate lyase of Mycobacterium sp. (strain MCS).